Here is a 388-residue protein sequence, read N- to C-terminus: Succinate--CoA ligase [ADP-forming] subunit beta (388 aa).

An ATP-grasp domain is found at 9 to 244 (KQLFARYGLP…PSQEDSREAH (236 aa)). ATP contacts are provided by residues Lys46, 53-55 (GRG), Glu99, Thr102, and Glu107. Mg(2+) contacts are provided by Asn199 and Asp213. Substrate contacts are provided by residues Asn264 and 321–323 (GIV).

Belongs to the succinate/malate CoA ligase beta subunit family. Heterotetramer of two alpha and two beta subunits. Requires Mg(2+) as cofactor.

The catalysed reaction is succinate + ATP + CoA = succinyl-CoA + ADP + phosphate. It catalyses the reaction GTP + succinate + CoA = succinyl-CoA + GDP + phosphate. Its pathway is carbohydrate metabolism; tricarboxylic acid cycle; succinate from succinyl-CoA (ligase route): step 1/1. Succinyl-CoA synthetase functions in the citric acid cycle (TCA), coupling the hydrolysis of succinyl-CoA to the synthesis of either ATP or GTP and thus represents the only step of substrate-level phosphorylation in the TCA. The beta subunit provides nucleotide specificity of the enzyme and binds the substrate succinate, while the binding sites for coenzyme A and phosphate are found in the alpha subunit. This Erwinia tasmaniensis (strain DSM 17950 / CFBP 7177 / CIP 109463 / NCPPB 4357 / Et1/99) protein is Succinate--CoA ligase [ADP-forming] subunit beta.